The chain runs to 213 residues: Thymidylate kinase (213 aa).

10-17 (GLEGAGKT) provides a ligand contact to ATP.

This sequence belongs to the thymidylate kinase family.

It catalyses the reaction dTMP + ATP = dTDP + ADP. Functionally, phosphorylation of dTMP to form dTDP in both de novo and salvage pathways of dTTP synthesis. The polypeptide is Thymidylate kinase (Shigella boydii serotype 18 (strain CDC 3083-94 / BS512)).